The chain runs to 480 residues: Sestrin-2 (480 aa).

M1 is modified (N-acetylmethionine). Positions 20-45 are disordered; it reads PGGVGDSGPGEEQRESRARRGPRGPS. The tract at residues 66–239 is N-terminal domain; mediates the alkylhydroperoxide reductase activity; it reads GLEALMSSGR…APTPPSEQSS (174 aa). The Cysteine sulfenic acid (-SOH) intermediate role is filled by C125. A Glycyl lysine isopeptide (Lys-Gly) (interchain with G-Cter in ubiquitin) cross-link involves residue K175. 2 disordered regions span residues 222–252 and 272–291; these read ADGS…SGGF and LLRD…ELEK. Position 249 is a phosphoserine (S249). The C-terminal domain; mediates TORC1 regulation stretch occupies residues 308–480; sequence PHPDMLCFVE…ALRAITRYMT (173 aa). Residues 374–377, T386, and E451 each bind L-leucine; that span reads TYNT.

It belongs to the sestrin family. In terms of assembly, interacts with the GATOR2 complex which is composed of MIOS, SEC13, SEH1L, WDR24 and WDR59; the interaction is negatively regulated by leucine. Conveys leucine availability via direct interaction with SEH1L and WDR24 components of the GATOR2 complex. Interacts with RRAGA, RRAGB, RRAGC and RRAGD; may function as a guanine nucleotide dissociation inhibitor for RRAGs and regulate them. May interact with the TORC2 complex. Interacts with KEAP1, RBX1, SQSTM and ULK1; to regulate the degradation of KEAP1. May also associate with the complex composed of TSC1, TSC2 and the AMP-responsive protein kinase/AMPK to regulate TORC1 signaling. May interact with PRDX1. Phosphorylated by ULK1 at multiple sites. Post-translationally, ubiquitinated at Lys-175 by RNF167 via 'Lys-63'-linked polyubiquitination in response to leucine deprivation: ubiquitination promotes SESN2-interaction with the GATOR2 complex, leading to inhibit the TORC1 signaling pathway. Deubiquitinated at Lys-175 by STAMBPL1, promoting the TORC1 signaling pathway. Ubiquitinated by RNF186; ubiquitination mediates proteasomal degradation. As to expression, widely expressed.

The protein resides in the cytoplasm. It carries out the reaction a hydroperoxide + L-cysteinyl-[protein] = S-hydroxy-L-cysteinyl-[protein] + an alcohol. Functions as an intracellular leucine sensor that negatively regulates the mTORC1 signaling pathway through the GATOR complex. In absence of leucine, binds the GATOR subcomplex GATOR2 and prevents mTORC1 signaling. Binding of leucine to SESN2 disrupts its interaction with GATOR2 thereby activating the TORC1 signaling pathway. This stress-inducible metabolic regulator also plays a role in protection against oxidative and genotoxic stresses. May negatively regulate protein translation in response to endoplasmic reticulum stress, via mTORC1. May positively regulate the transcription by NFE2L2 of genes involved in the response to oxidative stress by facilitating the SQSTM1-mediated autophagic degradation of KEAP1. May also mediate TP53 inhibition of TORC1 signaling upon genotoxic stress. Moreover, may prevent the accumulation of reactive oxygen species (ROS) through the alkylhydroperoxide reductase activity born by the N-terminal domain of the protein. Was originally reported to contribute to oxidative stress resistance by reducing PRDX1. However, this could not be confirmed. In Homo sapiens (Human), this protein is Sestrin-2.